A 187-amino-acid chain; its full sequence is Protein Flattop (187 aa).

Positions 97-187 (THSGHGIHTH…TPQLEREEPQ (91 aa)) are disordered. A compositionally biased stretch (polar residues) spans 122 to 131 (EGDQTCNAPT). A compositionally biased stretch (basic and acidic residues) spans 169 to 187 (KRREQSLEETPQLEREEPQ).

This sequence belongs to the Flattop family.

Its subcellular location is the cytoplasm. The protein resides in the cytoskeleton. It is found in the cilium basal body. It localises to the cell projection. The protein localises to the cilium. Its subcellular location is the apical cell membrane. The protein resides in the cilium axoneme. Microtubule inner protein (MIP) part of the dynein-decorated doublet microtubules (DMTs) in cilia axoneme. Acts as a regulator of cilium basal body docking and positioning in mono- and multiciliated cells. Regulates basal body docking and cilia formation in multiciliated lung cells. Regulates kinocilium positioning and stereocilia bundle morphogenesis in the inner ear. The polypeptide is Protein Flattop (Salmo salar (Atlantic salmon)).